Consider the following 285-residue polypeptide: 2-dehydro-3-deoxyphosphooctonate aldolase (285 aa).

This sequence belongs to the KdsA family.

Its subcellular location is the cytoplasm. The enzyme catalyses D-arabinose 5-phosphate + phosphoenolpyruvate + H2O = 3-deoxy-alpha-D-manno-2-octulosonate-8-phosphate + phosphate. Its pathway is carbohydrate biosynthesis; 3-deoxy-D-manno-octulosonate biosynthesis; 3-deoxy-D-manno-octulosonate from D-ribulose 5-phosphate: step 2/3. It participates in bacterial outer membrane biogenesis; lipopolysaccharide biosynthesis. The protein is 2-dehydro-3-deoxyphosphooctonate aldolase of Leptothrix cholodnii (strain ATCC 51168 / LMG 8142 / SP-6) (Leptothrix discophora (strain SP-6)).